The sequence spans 146 residues: MMGGSSSRIAAGLGAALFVGYCIYFDRKRRSDPNYKNKLRERRKKQKAAQEKAGLSRLPDLKDAEAVQKFFLEEIQLGEELLAQGDYEKGVDHLTNAIAVCGQPQQLLQVLQQTLPPPVFQMLLTKLPTISQRIVSAQSISDDDIE.

The Mitochondrial intermembrane segment spans residues M1–S5. A helical transmembrane segment spans residues S6–F25. Residues D26 to E146 lie on the Cytoplasmic side of the membrane. Residues N37–K47 show a composition bias toward basic residues. Positions N37–S56 are disordered. Phosphoserine is present on S141.

It belongs to the Tom20 family. As to quaternary structure, forms part of the preprotein translocase complex of the outer mitochondrial membrane (TOM complex). Interacts with tom22.

The protein localises to the mitochondrion outer membrane. Functionally, central component of the receptor complex responsible for the recognition and translocation of cytosolically synthesized mitochondrial preproteins. Together with tom22 functions as the transit peptide receptor at the surface of the mitochondrion outer membrane and facilitates the movement of preproteins into the tom40 translocation pore. The protein is Mitochondrial import receptor subunit TOM20 homolog B (tomm20b) of Danio rerio (Zebrafish).